The sequence spans 279 residues: Phosphonates import ATP-binding protein PhnC (279 aa).

In terms of domain architecture, ABC transporter spans 2–245; it reads FQLKNVTRQF…AVAAIYGAET (244 aa). 34-41 serves as a coordination point for ATP; it reads GRSGAGKS.

This sequence belongs to the ABC transporter superfamily. Phosphonates importer (TC 3.A.1.9.1) family. The complex is composed of two ATP-binding proteins (PhnC), two transmembrane proteins (PhnE) and a solute-binding protein (PhnD).

It is found in the cell inner membrane. It catalyses the reaction phosphonate(out) + ATP + H2O = phosphonate(in) + ADP + phosphate + H(+). In terms of biological role, part of the ABC transporter complex PhnCDE involved in phosphonates import. Responsible for energy coupling to the transport system. The chain is Phosphonates import ATP-binding protein PhnC from Rhizobium meliloti (strain 1021) (Ensifer meliloti).